The chain runs to 605 residues: Elongation factor 4 (605 aa).

The region spanning 4–186 (SSVRNFCIIA…AIVNKVPAPK (183 aa)) is the tr-type G domain. Residues 16-21 (DHGKST) and 133-136 (NKID) each bind GTP.

Belongs to the TRAFAC class translation factor GTPase superfamily. Classic translation factor GTPase family. LepA subfamily.

It localises to the cell membrane. The enzyme catalyses GTP + H2O = GDP + phosphate + H(+). Its function is as follows. Required for accurate and efficient protein synthesis under certain stress conditions. May act as a fidelity factor of the translation reaction, by catalyzing a one-codon backward translocation of tRNAs on improperly translocated ribosomes. Back-translocation proceeds from a post-translocation (POST) complex to a pre-translocation (PRE) complex, thus giving elongation factor G a second chance to translocate the tRNAs correctly. Binds to ribosomes in a GTP-dependent manner. This Dehalococcoides mccartyi (strain ATCC BAA-2100 / JCM 16839 / KCTC 5957 / BAV1) protein is Elongation factor 4.